The primary structure comprises 152 residues: Ribosome maturation factor RimP (152 aa).

Belongs to the RimP family.

The protein resides in the cytoplasm. Required for maturation of 30S ribosomal subunits. This Erwinia tasmaniensis (strain DSM 17950 / CFBP 7177 / CIP 109463 / NCPPB 4357 / Et1/99) protein is Ribosome maturation factor RimP.